Consider the following 152-residue polypeptide: 3-dehydroquinate dehydratase (152 aa).

The Proton acceptor role is filled by tyrosine 25. Asparagine 76, histidine 82, and aspartate 89 together coordinate substrate. The Proton donor role is filled by histidine 102. Substrate contacts are provided by residues 103-104 and arginine 113; that span reads LS.

This sequence belongs to the type-II 3-dehydroquinase family. In terms of assembly, homododecamer.

The catalysed reaction is 3-dehydroquinate = 3-dehydroshikimate + H2O. The protein operates within metabolic intermediate biosynthesis; chorismate biosynthesis; chorismate from D-erythrose 4-phosphate and phosphoenolpyruvate: step 3/7. Its function is as follows. Catalyzes a trans-dehydration via an enolate intermediate. This is 3-dehydroquinate dehydratase from Gloeothece citriformis (strain PCC 7424) (Cyanothece sp. (strain PCC 7424)).